Here is a 340-residue protein sequence, read N- to C-terminus: Lipoate--protein ligase 2 (340 aa).

One can recognise a BPL/LPL catalytic domain in the interval 31–222; that stretch reads FLDEDILFPY…QILGIDDIKE (192 aa). ATP-binding positions include Arg73, 78–81, Lys136, and Ala140; that span reads GAVY. Lys136 provides a ligand contact to (R)-lipoate. Positions 293–321 form a coiled coil; it reads QGDIKDVEEALQGTKMTREDLMHQLKQLD.

Belongs to the LplA family.

It carries out the reaction L-lysyl-[lipoyl-carrier protein] + (R)-lipoate + ATP = N(6)-[(R)-lipoyl]-L-lysyl-[lipoyl-carrier protein] + AMP + diphosphate + H(+). Its pathway is protein modification; protein lipoylation via exogenous pathway; protein N(6)-(lipoyl)lysine from lipoate: step 1/2. The protein operates within protein modification; protein lipoylation via exogenous pathway; protein N(6)-(lipoyl)lysine from lipoate: step 2/2. Its function is as follows. Catalyzes specifically the lipoylation of GcvH-L (SAV0324), likely via the ATP-dependent activation of lipoate to lipoyl-AMP and the transfer of the activated lipoyl onto the lipoyl domain of the target protein. Can also utilize lipoamide as substrate for GcvH-L modification. The polypeptide is Lipoate--protein ligase 2 (Staphylococcus aureus (strain Mu50 / ATCC 700699)).